The chain runs to 485 residues: MDSAEKGLLVVSDREEVNKKDGFLRETKKLSYIAGPMIAVNSSMYVLQVISIMMVGHLGELFLSSTAIAVSFCSVTGFSVVFGLASALETLCGQANGAKQYEKLGVHTYTGIVSLFLVCIPLSLLWTYIGDILSLIGQDAMVAQEAGKFATWLIPALFGYATLQPLVRFFQAQSLILPLVMSSVSSLCIHIVLCWSLVFKFGLGSLGAAIAIGVSYWLNVTVLGLYMTFSSSCSKSRATISMSLFEGMGEFFRFGIPSASMICLEWWSFEFLVLLSGILPNPKLEASVLSVCLSTQSSLYQIPESLGAAASTRVANELGAGNPKQARMAVYTAMVITGVESIMVGAIVFGARNVFGYLFSSETEVVDYVKSMAPLLSLSVIFDALHAALSGVARGSGRQDIGAYVNLAAYYLFGIPTAILLAFGFKMRGRGLWIGITVGSCVQAVLLGLIVILTNWKKQARKARERVMGDEYEEKESEEEHEYIS.

The next 12 membrane-spanning stretches (helical) occupy residues 30–50 (LSYI…LQVI), 68–88 (IAVS…ASAL), 112–132 (IVSL…IGDI), 147–167 (GKFA…QPLV), 175–195 (LILP…VLCW), 207–227 (GAAI…GLYM), 259–279 (ASMI…SGIL), 288–308 (VLSV…SLGA), 329–349 (AVYT…AIVF), 372–392 (MAPL…LSGV), 405–425 (VNLA…AFGF), and 432–452 (LWIG…LIVI).

Belongs to the multi antimicrobial extrusion (MATE) (TC 2.A.66.1) family.

It localises to the membrane. This chain is Protein DETOXIFICATION 14, found in Arabidopsis thaliana (Mouse-ear cress).